The following is a 298-amino-acid chain: RYEPRARWIEQEGPEYWERETRRAKGNEQSFRVDLRTALRYYNQSAGGSHTLQWMAGCDVESDGRLLRGYWQFAYDGCDYIALNEDLKTWTAADMAAQITRRKWEQAGAAERDRAYLEGECVEWLRRYLKNGNATLLRTDPPKAHVTHHRRPEGDVTLRCWALGFYPADITLTWQLNGEELTQEMELVETRPAGDGTFQKWASVVVPLGKEQKYTCHVEHEGLPEPLTLRWGKEEPPSSTKTNTVIIAVPVVLGAVVILGAVMAFVMKRRRNTGGKGGDYALAPVSQSSDMSLPDCKV.

Residues 1–244 lie on the Extracellular side of the membrane; sequence RYEPRARWIE…EPPSSTKTNT (244 aa). An N-linked (GlcNAc...) asparagine glycan is attached at N43. C58 and C121 are disulfide-bonded. A glycan (N-linked (GlcNAc...) asparagine) is linked at N133. The Ig-like C1-type domain maps to 142–230; it reads PKAHVTHHRR…EGLPEPLTLR (89 aa). An intrachain disulfide couples C160 to C216. The helical transmembrane segment at 245-265 threads the bilayer; it reads VIIAVPVVLGAVVILGAVMAF. The Cytoplasmic portion of the chain corresponds to 266 to 298; it reads VMKRRRNTGGKGGDYALAPVSQSSDMSLPDCKV. The tract at residues 277 to 298 is disordered; the sequence is GGDYALAPVSQSSDMSLPDCKV. Phosphoserine is present on residues S289 and S292.

This sequence belongs to the MHC class I family. Heterodimer of an alpha chain and a beta chain (beta-2-microglobulin).

The protein localises to the membrane. Functionally, involved in the presentation of foreign antigens to the immune system. The protein is H-2 class I histocompatibility antigen, alpha chain (H2-D1) of Mus musculus (Mouse).